A 319-amino-acid polypeptide reads, in one-letter code: NADH-quinone oxidoreductase subunit H 1 (319 aa).

The next 9 membrane-spanning stretches (helical) occupy residues 5-25 (ILTA…AGVF), 78-98 (LAPA…AFGE), 109-129 (VMFL…GALA), 147-167 (LAYE…AGSL), 179-199 (VWFI…GIAA), 214-234 (LVGG…FLGE), 238-258 (ILLV…GPWL), 262-282 (IWFG…RAAL), and 294-314 (AWKV…FIVV).

The protein belongs to the complex I subunit 1 family. As to quaternary structure, NDH-1 is composed of 14 different subunits. Subunits NuoA, H, J, K, L, M, N constitute the membrane sector of the complex.

Its subcellular location is the cell inner membrane. It carries out the reaction a quinone + NADH + 5 H(+)(in) = a quinol + NAD(+) + 4 H(+)(out). NDH-1 shuttles electrons from NADH, via FMN and iron-sulfur (Fe-S) centers, to quinones in the respiratory chain. The immediate electron acceptor for the enzyme in this species is believed to be ubiquinone. Couples the redox reaction to proton translocation (for every two electrons transferred, four hydrogen ions are translocated across the cytoplasmic membrane), and thus conserves the redox energy in a proton gradient. This subunit may bind ubiquinone. The sequence is that of NADH-quinone oxidoreductase subunit H 1 from Rhodopseudomonas palustris (strain BisA53).